The following is a 209-amino-acid chain: Ribosomal RNA small subunit methyltransferase G (209 aa).

S-adenosyl-L-methionine-binding positions include G72, L77, A123–E124, and R138.

Belongs to the methyltransferase superfamily. RNA methyltransferase RsmG family.

It is found in the cytoplasm. Specifically methylates the N7 position of guanine in position 518 of 16S rRNA. This Leifsonia xyli subsp. xyli (strain CTCB07) protein is Ribosomal RNA small subunit methyltransferase G.